The sequence spans 79 residues: ATP synthase subunit c (79 aa).

The next 2 membrane-spanning stretches (helical) occupy residues 11–31 and 53–73; these read MAAAVMMGLAAIGAAIGIGIL and FFIVMGLVDAIPMIAVGLGLY.

The protein belongs to the ATPase C chain family. As to quaternary structure, F-type ATPases have 2 components, F(1) - the catalytic core - and F(0) - the membrane proton channel. F(1) has five subunits: alpha(3), beta(3), gamma(1), delta(1), epsilon(1). F(0) has three main subunits: a(1), b(2) and c(10-14). The alpha and beta chains form an alternating ring which encloses part of the gamma chain. F(1) is attached to F(0) by a central stalk formed by the gamma and epsilon chains, while a peripheral stalk is formed by the delta and b chains.

The protein localises to the cell inner membrane. In terms of biological role, f(1)F(0) ATP synthase produces ATP from ADP in the presence of a proton or sodium gradient. F-type ATPases consist of two structural domains, F(1) containing the extramembraneous catalytic core and F(0) containing the membrane proton channel, linked together by a central stalk and a peripheral stalk. During catalysis, ATP synthesis in the catalytic domain of F(1) is coupled via a rotary mechanism of the central stalk subunits to proton translocation. Functionally, key component of the F(0) channel; it plays a direct role in translocation across the membrane. A homomeric c-ring of between 10-14 subunits forms the central stalk rotor element with the F(1) delta and epsilon subunits. In Serratia proteamaculans (strain 568), this protein is ATP synthase subunit c.